A 1294-amino-acid polypeptide reads, in one-letter code: Unconventional myosin-VI (1294 aa).

The Myosin N-terminal SH3-like domain occupies 2–53 (EDGKPVWAPHPTDGFQMGNIVDIGPDSLTIEPLNQKGKTFLALINQVFPAEE). Residues 57-771 (KDVEDNCSLM…KFAEFDQIMK (715 aa)) form the Myosin motor domain. 151 to 158 (GESGAGKT) provides a ligand contact to ATP. Position 267 is a phosphoserine (serine 267). Residues 273 to 317 (YLNRGCTRYFANKETDKQILQNRKSPEYLKAGSMKDPLLDDHGDF) are responsible for slow ATPase activity. Threonine 405 is subject to Phosphothreonine. Serine 604 is modified (phosphoserine). Positions 665 to 672 (FIRCIKPN) are actin-binding. The tract at residues 782–810 (KRVNHWLTCSRWKKVQWCSLSVIKLKNKI) is required for binding calmodulin. One can recognise an IQ domain in the interval 814 to 834 (AEACIKMQKTIRMWLCKRRHK). A three-helix bundle region spans residues 835–916 (PRIDGLVKVG…EELLSALQKK (82 aa)). The SAH stretch occupies residues 917-984 (KQQEEEAERL…EDDEKRIQAE (68 aa)). Residues 934–955 (EKERKRREEDEKRRRKEEEERR) are disordered. Residue serine 1025 is modified to Phosphoserine. The segment at 1060–1285 (KEMSEFLSRG…ESRQARPTYA (226 aa)) is interaction with TAX1BP1 and CALCOCO2/NDP52. The interval 1116 to 1118 (RRL) is interaction with OPTN. Residue serine 1155 is modified to Phosphoserine. The tract at residues 1157-1285 (QQNPAAQIPA…ESRQARPTYA (129 aa)) is interaction with TOM1.

The protein belongs to the TRAFAC class myosin-kinesin ATPase superfamily. Myosin family. In terms of assembly, homodimer; dimerization seems to implicate the unfolding of the three-helix bundle region creating an additional calmodulin binding site, and cargo binding. Able to function as a monomer under specific conditions in vitro. Forms a complex with CFTR and DAB2 in the apical membrane of epithelial cells. Component of the DISP/DOCK7-induced septin displacement complex, at least composed of DOCK7, LRCH3 and MYO6. Binding to calmodulin through a unique insert, not found in other myosins, located in the neck region between the motor domain and the IQ domain appears to contribute to the directionality reversal. This interaction occurs only if the C-terminal lobe of calmodulin is occupied by calcium. Interaction with F-actin/ACTN1 occurs only at the apical brush border domain of the proximal tubule cells. Interacts with DAB2. In vitro, the C-terminal globular tail binds a C-terminal region of DAB2. Interacts with CFTR. Interacts with CABP5. Interacts with TOM1. Interacts with OPTN. Interacts with TAX1BP1 and CALCOCO2/NDP52. Interacts with TOM1L2. Interacts with CLIC5; may work together in a complex which also includes RDX and MYO6 to stabilize linkages between the plasma membrane and subjacent actin cytoskeleton at the base of stereocilia. Post-translationally, phosphorylation in the motor domain, induced by EGF, results in translocation of MYO6 from the cell surface to membrane ruffles and affects F-actin dynamics. Phosphorylated in vitro by p21-activated kinase (PAK). Expressed in most tissues examined including heart, brain, placenta, pancreas, spleen, thymus, prostate, testis, ovary, small intestine and colon. Highest levels in brain, pancreas, testis and small intestine. Also expressed in fetal brain and cochlea. Isoform 1 and isoform 2, containing the small insert, and isoform 4, containing neither insert, are expressed in unpolarized epithelial cells.

The protein resides in the golgi apparatus. The protein localises to the trans-Golgi network membrane. It localises to the nucleus. Its subcellular location is the cytoplasm. It is found in the perinuclear region. The protein resides in the membrane. The protein localises to the clathrin-coated pit. It localises to the cytoplasmic vesicle. Its subcellular location is the clathrin-coated vesicle. It is found in the cell projection. The protein resides in the filopodium. The protein localises to the ruffle membrane. It localises to the microvillus. Its subcellular location is the cytosol. It is found in the autophagosome. The protein resides in the endosome. The protein localises to the clathrin-coated vesicle membrane. Functionally, myosins are actin-based motor molecules with ATPase activity. Unconventional myosins serve in intracellular movements. Myosin 6 is a reverse-direction motor protein that moves towards the minus-end of actin filaments. Has slow rate of actin-activated ADP release due to weak ATP binding. Functions in a variety of intracellular processes such as vesicular membrane trafficking and cell migration. Required for the structural integrity of the Golgi apparatus via the p53-dependent pro-survival pathway. Appears to be involved in a very early step of clathrin-mediated endocytosis in polarized epithelial cells. Together with TOM1, mediates delivery of endocytic cargo to autophagosomes thereby promoting autophagosome maturation and driving fusion with lysosomes. Links TOM1 with autophagy receptors, such as TAX1BP1; CALCOCO2/NDP52 and OPTN. May act as a regulator of F-actin dynamics. As part of the DISP complex, may regulate the association of septins with actin and thereby regulate the actin cytoskeleton. May play a role in transporting DAB2 from the plasma membrane to specific cellular targets. May play a role in the extension and network organization of neurites. Required for structural integrity of inner ear hair cells. Required for the correct localization of CLIC5 and RDX at the stereocilium base. Modulates RNA polymerase II-dependent transcription. The protein is Unconventional myosin-VI of Homo sapiens (Human).